Here is a 54-residue protein sequence, read N- to C-terminus: Large ribosomal subunit protein bL33 (54 aa).

It belongs to the bacterial ribosomal protein bL33 family.

The polypeptide is Large ribosomal subunit protein bL33 (Chloroflexus aurantiacus (strain ATCC 29366 / DSM 635 / J-10-fl)).